We begin with the raw amino-acid sequence, 189 residues long: dCTP deaminase (189 aa).

Residues 112–117 (KSTYAR), 136–138 (TLE), glutamine 157, tyrosine 171, and glutamine 181 each bind dCTP. Glutamate 138 acts as the Proton donor/acceptor in catalysis.

Belongs to the dCTP deaminase family. As to quaternary structure, homotrimer.

The catalysed reaction is dCTP + H2O + H(+) = dUTP + NH4(+). It functions in the pathway pyrimidine metabolism; dUMP biosynthesis; dUMP from dCTP (dUTP route): step 1/2. Catalyzes the deamination of dCTP to dUTP. The sequence is that of dCTP deaminase from Xanthomonas euvesicatoria pv. vesicatoria (strain 85-10) (Xanthomonas campestris pv. vesicatoria).